A 176-amino-acid chain; its full sequence is Cystatin-related protein 2 (176 aa).

Positions 1-26 (MYKTLCGTQLLLAIFVLFLNFSHATA) are cleaved as a signal peptide. The propeptide occupies 27-30 (KGTR). N-linked (GlcNAc...) asparagine glycosylation is present at N71. 2 cysteine pairs are disulfide-bonded: C129–C139 and C153–C173.

This sequence belongs to the cystatin family. Prostate.

This is Cystatin-related protein 2 (Crp2) from Rattus norvegicus (Rat).